The sequence spans 181 residues: ADP-ribosylation factor 1 (181 aa).

Gly-2 carries N-myristoyl glycine lipidation. Residues 3 to 16 (LYVSRLFNRLFQKK) form an important for the stable binding to the membranes region. Residues 27-32 (AAGKTT), 126-129 (NKQD), and Ala-160 each bind GTP.

It belongs to the small GTPase superfamily. Arf family. May interact with GTPase RAB5b.

The protein localises to the golgi apparatus membrane. The catalysed reaction is GTP + H2O = GDP + phosphate + H(+). Alternates between an inactive GDP-bound form and an active GTP-bound form. Intrinsic GTPase activity is almost undetectable in vitro. Activated by a guanine nucleotide-exchange factor (GEF) and inactivated by GTPase-activating protein ARFGAP1. Functionally, small GTPase involved in protein trafficking between different compartments. Modulates vesicle budding and uncoating within the Golgi complex. In its GTP-bound form, triggers the recruitment of coatomer proteins to the Golgi membrane. The hydrolysis of ARF1-bound GTP, which is mediated by ARFGAPs proteins, is required for dissociation of coat proteins from Golgi membranes and vesicles. Regulates the transport of N-acylated AK2 to the parasitophorous vacuole membrane. May be involved in the activation of lipid kinase PIP5K. This is ADP-ribosylation factor 1 from Plasmodium falciparum (isolate 3D7).